The sequence spans 263 residues: Glutamate/glutamine/aspartate/asparagine transport ATP-binding protein BztD (263 aa).

One can recognise an ABC transporter domain in the interval 23 to 257 (IQISQMNKWY…PQSERTKQFL (235 aa)). 55 to 62 (GPSGSGKS) contacts ATP.

It belongs to the ABC transporter superfamily. As to quaternary structure, bztB and BztC form a heterodimer which can form a membrane complex with a homodimer of BztD.

It is found in the cell membrane. In terms of biological role, part of a binding-protein-dependent transport system for glutamate, glutamine, aspartate, asparagine. Probably responsible for energy coupling to the transport system. This chain is Glutamate/glutamine/aspartate/asparagine transport ATP-binding protein BztD (bztD), found in Rhodobacter capsulatus (strain ATCC BAA-309 / NBRC 16581 / SB1003).